The sequence spans 702 residues: Polyribonucleotide nucleotidyltransferase (702 aa).

Residues D491 and D497 each coordinate Mg(2+). The region spanning 558–618 (PKMKTFMIPV…TAIEKAYQLI (61 aa)) is the KH domain. The S1 motif domain maps to 628 to 696 (GEKIIGPVVK…GKGKIKLQLI (69 aa)).

It belongs to the polyribonucleotide nucleotidyltransferase family. Mg(2+) is required as a cofactor.

It is found in the cytoplasm. It carries out the reaction RNA(n+1) + phosphate = RNA(n) + a ribonucleoside 5'-diphosphate. In terms of biological role, involved in mRNA degradation. Catalyzes the phosphorolysis of single-stranded polyribonucleotides processively in the 3'- to 5'-direction. The sequence is that of Polyribonucleotide nucleotidyltransferase from Spiroplasma citri.